The chain runs to 72 residues: Large ribosomal subunit protein bL28 (72 aa).

This sequence belongs to the bacterial ribosomal protein bL28 family.

In Chlorobium limicola (strain DSM 245 / NBRC 103803 / 6330), this protein is Large ribosomal subunit protein bL28.